A 349-amino-acid chain; its full sequence is Mitogen-activated protein kinase sty1 (349 aa).

In terms of domain architecture, Protein kinase spans 20 to 299 (YSDLQPIGMG…AADALAHNYL (280 aa)). Residues 26–34 (IGMGAFGLV) and Lys-49 contribute to the ATP site. The active-site Proton acceptor is the Asp-141. The residue at position 171 (Thr-171) is a Phosphothreonine. A TXY motif is present at residues 171–173 (TGY). Tyr-173 is modified (phosphotyrosine). Position 175 is a phosphoserine (Ser-175). At Thr-176 the chain carries Phosphothreonine. The TXY signature appears at 176–178 (TRY).

This sequence belongs to the protein kinase superfamily. Ser/Thr protein kinase family. MAP kinase subfamily. HOG1 sub-subfamily. In terms of assembly, interacts with cdc37, cmk2, hal4, sin1 and srk1. Mg(2+) is required as a cofactor. Dually phosphorylated on Thr-171 and Tyr-173, which activates the enzyme. Phosphorylated by wis1 in response to osmotic stress, nutrient limitation, hydrogen peroxide and arsenite. Dephosphorylated by pyp1 and pyp2.

It localises to the cytoplasm. The protein localises to the nucleus. The catalysed reaction is L-seryl-[protein] + ATP = O-phospho-L-seryl-[protein] + ADP + H(+). It catalyses the reaction L-threonyl-[protein] + ATP = O-phospho-L-threonyl-[protein] + ADP + H(+). Its activity is regulated as follows. Activated by the MAPK kinase wisl, and negatively regulated by pypl and pyp2 tyrosine phosphatases. Proline-directed serine/threonine-protein kinase involved in a signal transduction pathway that is activated by changes in the osmolarity of the extracellular environment. Controls osmotic regulation of transcription of target genes. Involved in osmoregulation and stress response pathways leading to an efficient start of sexual differentiation. Supports translation initiation and facilitates adaptation to environmental stress in part through reducing eIF2-alpha phosphorylation. Links the cell-cycle G2/M control with changes in the extracellular environment that affect cell physiology. Phosphorylates atf1 and mkp1. In conjunction with hal4, has a role in the cellular resistance to toxic cations such as Na(+), Li(+) and Ca(2+). Involved in resistance to arsenite, methylglyoxal and hydrogen peroxide. Involved in induction of thermotolerance in mRNA export, as well as in vacuolar fission. The polypeptide is Mitogen-activated protein kinase sty1 (sty1) (Schizosaccharomyces pombe (strain 972 / ATCC 24843) (Fission yeast)).